Reading from the N-terminus, the 501-residue chain is 7-alpha-hydroxycholest-4-en-3-one 12-alpha-hydroxylase (501 aa).

Residues 1 to 21 (MVLWGPVLGALLVVIAGYLCL) traverse the membrane as a helical segment. Ser326 is modified (phosphoserine). Cys440 is a heme binding site.

The protein belongs to the cytochrome P450 family. It depends on heme as a cofactor. Liver.

Its subcellular location is the endoplasmic reticulum membrane. It is found in the microsome membrane. It carries out the reaction 7alpha-hydroxycholest-4-en-3-one + reduced [NADPH--hemoprotein reductase] + O2 = 7alpha,12alpha-dihydroxycholest-4-en-3-one + oxidized [NADPH--hemoprotein reductase] + H2O + H(+). The catalysed reaction is 5beta-cholestane-3alpha,7alpha-diol + reduced [NADPH--hemoprotein reductase] + O2 = 5beta-cholestane-3alpha,7alpha,12alpha-triol + oxidized [NADPH--hemoprotein reductase] + H2O + H(+). The enzyme catalyses chenodeoxycholate + reduced [NADPH--hemoprotein reductase] + O2 = cholate + oxidized [NADPH--hemoprotein reductase] + H2O + H(+). Its pathway is lipid metabolism; bile acid biosynthesis. Functionally, a cytochrome P450 monooxygenase involved in primary bile acid biosynthesis. Catalyzes the 12alpha-hydroxylation of 7alpha-hydroxy-4-cholesten-3-one, an intermediate metabolite in cholic acid biosynthesis. Controls biliary balance of cholic acid and chenodeoxycholic acid, ultimately regulating the intestinal absorption of dietary lipids. Mechanistically, uses molecular oxygen inserting one oxygen atom into a substrate, and reducing the second into a water molecule, with two electrons provided by NADPH via cytochrome P450 reductase (CPR; NADPH--hemoprotein reductase). This chain is 7-alpha-hydroxycholest-4-en-3-one 12-alpha-hydroxylase, found in Homo sapiens (Human).